A 326-amino-acid polypeptide reads, in one-letter code: tRNA-dihydrouridine(20/20a) synthase (326 aa).

FMN contacts are provided by residues P11 to L13 and Q63. C93 serves as the catalytic Proton donor. Residues K132, H165, N205–G207, and G227–R228 contribute to the FMN site.

It belongs to the Dus family. DusA subfamily. FMN serves as cofactor.

The catalysed reaction is 5,6-dihydrouridine(20) in tRNA + NADP(+) = uridine(20) in tRNA + NADPH + H(+). It catalyses the reaction 5,6-dihydrouridine(20) in tRNA + NAD(+) = uridine(20) in tRNA + NADH + H(+). It carries out the reaction 5,6-dihydrouridine(20a) in tRNA + NADP(+) = uridine(20a) in tRNA + NADPH + H(+). The enzyme catalyses 5,6-dihydrouridine(20a) in tRNA + NAD(+) = uridine(20a) in tRNA + NADH + H(+). Functionally, catalyzes the synthesis of 5,6-dihydrouridine (D), a modified base found in the D-loop of most tRNAs, via the reduction of the C5-C6 double bond in target uridines. Specifically modifies U20 and U20a in tRNAs. This is tRNA-dihydrouridine(20/20a) synthase from Vibrio vulnificus (strain CMCP6).